The sequence spans 193 residues: Peptidyl-tRNA hydrolase (193 aa).

Residue His17 participates in tRNA binding. The active-site Proton acceptor is His22. The tRNA site is built by Phe68, Asn70, and Asn116.

The protein belongs to the PTH family. In terms of assembly, monomer.

Its subcellular location is the cytoplasm. The enzyme catalyses an N-acyl-L-alpha-aminoacyl-tRNA + H2O = an N-acyl-L-amino acid + a tRNA + H(+). Functionally, hydrolyzes ribosome-free peptidyl-tRNAs (with 1 or more amino acids incorporated), which drop off the ribosome during protein synthesis, or as a result of ribosome stalling. In terms of biological role, catalyzes the release of premature peptidyl moieties from peptidyl-tRNA molecules trapped in stalled 50S ribosomal subunits, and thus maintains levels of free tRNAs and 50S ribosomes. In Xanthomonas axonopodis pv. citri (strain 306), this protein is Peptidyl-tRNA hydrolase.